The following is a 656-amino-acid chain: UvrABC system protein C (656 aa).

The GIY-YIG domain maps to threonine 16–valine 95. The UVR domain maps to glycine 208 to valine 243.

Belongs to the UvrC family. Interacts with UvrB in an incision complex.

Its subcellular location is the cytoplasm. Functionally, the UvrABC repair system catalyzes the recognition and processing of DNA lesions. UvrC both incises the 5' and 3' sides of the lesion. The N-terminal half is responsible for the 3' incision and the C-terminal half is responsible for the 5' incision. The sequence is that of UvrABC system protein C from Thermobifida fusca (strain YX).